A 492-amino-acid chain; its full sequence is Ribose import ATP-binding protein RbsA (492 aa).

2 consecutive ABC transporter domains span residues 3–239 (IDMR…VGRK) and 238–492 (RKLE…TGGK). Residue 35 to 42 (GENGAGKS) participates in ATP binding.

It belongs to the ABC transporter superfamily. Ribose importer (TC 3.A.1.2.1) family. As to quaternary structure, the complex is composed of an ATP-binding protein (RbsA), two transmembrane proteins (RbsC) and a solute-binding protein (RbsB).

Its subcellular location is the cell membrane. The enzyme catalyses D-ribose(out) + ATP + H2O = D-ribose(in) + ADP + phosphate + H(+). Part of the ABC transporter complex RbsABC involved in ribose import. Responsible for energy coupling to the transport system. This is Ribose import ATP-binding protein RbsA from Streptococcus agalactiae serotype V (strain ATCC BAA-611 / 2603 V/R).